The primary structure comprises 432 residues: 5-methylthioadenosine/S-adenosylhomocysteine deaminase (432 aa).

The Zn(2+) site is built by His62 and His64. Positions 91 and 184 each coordinate substrate. His211 serves as a coordination point for Zn(2+). Residues Glu214 and Asp299 each contribute to the substrate site. Position 299 (Asp299) interacts with Zn(2+).

It belongs to the metallo-dependent hydrolases superfamily. MTA/SAH deaminase family. It depends on Zn(2+) as a cofactor.

The catalysed reaction is S-adenosyl-L-homocysteine + H2O + H(+) = S-inosyl-L-homocysteine + NH4(+). It catalyses the reaction S-methyl-5'-thioadenosine + H2O + H(+) = S-methyl-5'-thioinosine + NH4(+). Catalyzes the deamination of 5-methylthioadenosine and S-adenosyl-L-homocysteine into 5-methylthioinosine and S-inosyl-L-homocysteine, respectively. Is also able to deaminate adenosine. This Haloarcula marismortui (strain ATCC 43049 / DSM 3752 / JCM 8966 / VKM B-1809) (Halobacterium marismortui) protein is 5-methylthioadenosine/S-adenosylhomocysteine deaminase.